A 206-amino-acid polypeptide reads, in one-letter code: Elongation factor 1-beta (206 aa).

Ala-2 is modified (N-acetylalanine). A Glycyl lysine isopeptide (Lys-Gly) (interchain with G-Cter in ubiquitin) cross-link involves residue Lys-13. Residues Ser-31 and Ser-86 each carry the phosphoserine modification.

Belongs to the EF-1-beta/EF-1-delta family. As to quaternary structure, the eukaryotic elongation factor 1 complex (eEF1) is probably a heterohexamer. Two trimeric complexes, each composed of eEF1A (TEF1 or TEF2), eEF1Balpha (EFB1) and eEF1Bgamma (CAM1 or TEF4), are probably dimerized via the eF1Bgamma subunits. eEF1Balpha interacts directly with eEF1A. eEF1Balpha and eEF1Bgamma form the eEF1B subcomplex with the GEF activity. Post-translationally, S-thiolated in response to oxidative stress, probably inhibiting the protein and causing a reduction in protein synthesis.

It functions in the pathway protein biosynthesis; polypeptide chain elongation. Catalytic subunit of the guanine nucleotide exchange factor (GEF) (eEF1B subcomplex) of the eukaryotic elongation factor 1 complex (eEF1). Stimulates the exchange of GDP for GTP on elongation factor 1A (eEF1A), probably by displacing GDP from the nucleotide binding pocket in eEF1A. The 30-fold higher concentration of GTP compared to GDP in cells favors the formation of eEF1A-GTP, which rapidly forms a ternary complex with aminoacyl-tRNA that in turn displaces eEF1B from the complex. This is Elongation factor 1-beta (EFB1) from Saccharomyces cerevisiae (strain ATCC 204508 / S288c) (Baker's yeast).